Consider the following 74-residue polypeptide: uncharacterized protein (74 aa).

Its subcellular location is the mitochondrion. This is an uncharacterized protein from Marchantia polymorpha (Common liverwort).